Consider the following 224-residue polypeptide: Oxalate oxidase 2 (224 aa).

A signal peptide spans 1 to 23; the sequence is MGYSKTLAVSLFAVLLLAPAVLA. Residues C33 and C49 are joined by a disulfide bond. In terms of domain architecture, Cupin type-1 spans 63–214; sequence SKLAKAGNTS…ALRVEAGVVE (152 aa). Residues N70 and N75 are each glycosylated (N-linked (GlcNAc...) asparagine). Residues H111, H113, E118, and H160 each contribute to the Mn(2+) site.

It belongs to the germin family. In terms of assembly, oligomer (believed to be a pentamer but probably hexamer). In terms of processing, glycosylated. A form called G contains antennary GlcNAc residues, whereas a form called G' lacks antennary GlcNAc residues in its otherwise identical glycans. As to expression, root.

The protein localises to the secreted. It localises to the extracellular space. Its subcellular location is the apoplast. The protein resides in the cell wall. The enzyme catalyses oxalate + O2 + 2 H(+) = H2O2 + 2 CO2. Releases hydrogen peroxide in the apoplast. May play an important role in several aspects of plant growth and defense mechanisms. This chain is Oxalate oxidase 2, found in Hordeum vulgare (Barley).